The primary structure comprises 205 residues: Putative 3-methyladenine DNA glycosylase (205 aa).

It belongs to the DNA glycosylase MPG family.

This chain is Putative 3-methyladenine DNA glycosylase, found in Bacillus thuringiensis (strain Al Hakam).